We begin with the raw amino-acid sequence, 209 residues long: MTLAKDIARDLLDIKAVYLKPEEPFTWASGIKSPIYTDNRITLSYPETRTLIENGFVETIKEAFPEVEVIAGTATAGIPHGAIIADKMNLPFAYIRSKPKDHGAGNQIEGRVTKGQKMVIIEDLISTGGSVLDAVAAAQREGADVLGVVAIFTYELPKATANFEKASVKLVTLSNYSELIKVAKVQGYIDADGLTLLKKFKENQETWQD.

Residues Arg-96, Lys-100, His-102, and 122–130 (EDLISTGGS) contribute to the 5-phospho-alpha-D-ribose 1-diphosphate site. Ser-126 provides a ligand contact to orotate.

This sequence belongs to the purine/pyrimidine phosphoribosyltransferase family. PyrE subfamily. In terms of assembly, homodimer. Mg(2+) is required as a cofactor.

The catalysed reaction is orotidine 5'-phosphate + diphosphate = orotate + 5-phospho-alpha-D-ribose 1-diphosphate. It participates in pyrimidine metabolism; UMP biosynthesis via de novo pathway; UMP from orotate: step 1/2. Functionally, catalyzes the transfer of a ribosyl phosphate group from 5-phosphoribose 1-diphosphate to orotate, leading to the formation of orotidine monophosphate (OMP). In Streptococcus mutans serotype c (strain ATCC 700610 / UA159), this protein is Orotate phosphoribosyltransferase.